The following is a 452-amino-acid chain: Mitochondrial import inner membrane translocase subunit TIM50 (452 aa).

The transit peptide at 1–23 directs the protein to the mitochondrion; the sequence is MSLSKLTQTCFSRHQAKTFIRLY. The Mitochondrial matrix segment spans residues 24–167; sequence SSDFKSLLGP…RRKRMERNTR (144 aa). Disordered regions lie at residues 96-115 and 130-153; these read IEAE…TSSA and ESAA…GNAE. Over residues 131-144 the composition is skewed to low complexity; it reads SAASKSSSSSGGSS. Residues 168–188 form a helical membrane-spanning segment; the sequence is IGAYVLFGGSIIGFISFCFYY. The Mitochondrial intermembrane portion of the chain corresponds to 189–452; that stretch reads GRAQRDEFGN…LFGSRRHVNA (264 aa). One can recognise an FCP1 homology domain in the interval 243-387; that stretch reads YLQPKYTIVI…VDLAELLKTI (145 aa).

This sequence belongs to the TIM50 family.

Its subcellular location is the mitochondrion inner membrane. Its function is as follows. Essential component of the TIM23 complex, a complex that mediates the translocation of transit peptide-containing proteins across the mitochondrial inner membrane. This is Mitochondrial import inner membrane translocase subunit TIM50 (scpl-4) from Caenorhabditis elegans.